A 449-amino-acid chain; its full sequence is Hyaluronidase-1 (449 aa).

The signal sequence occupies residues 1–23 (MYHIWIKFLAAWIFLKRFNGVHV). Intrachain disulfides connect C47–C340 and C211–C227. N67, N103, and N111 each carry an N-linked (GlcNAc...) asparagine glycan. E135 (proton donor) is an active-site residue. N153 is a glycosylation site (N-linked (GlcNAc...) asparagine). An N-linked (GlcNAc...) asparagine glycan is attached at N357. 3 disulfide bridges follow: C365–C376, C370–C427, and C429–C438. The N-linked (GlcNAc...) asparagine glycan is linked to N401. Residues 427-438 (CQCYQGWKGLYC) form the EGF-like domain.

This sequence belongs to the glycosyl hydrolase 56 family. Monomer. Expressed by the venom gland.

The protein resides in the secreted. The enzyme catalyses Random hydrolysis of (1-&gt;4)-linkages between N-acetyl-beta-D-glucosamine and D-glucuronate residues in hyaluronate.. Snake venom endo-hyaluronidase that degrades hyaluronan to smaller oligosaccharide fragments. In venom, it is not toxic by itself, but increases the diffusion of other venom proteins by degrading the extracellular matrix. In addition, it displays antiedematogenic activity. This chain is Hyaluronidase-1, found in Cerastes cerastes (Horned desert viper).